The sequence spans 1001 residues: Serine/threonine-protein kinase TAO1 (1001 aa).

At serine 9 the chain carries Phosphoserine. One can recognise a Protein kinase domain in the interval 28–281; sequence FTDLREIGHG…SEELLKHMFV (254 aa). ATP-binding positions include 34–42 and lysine 57; that span reads IGHGSFGAV. Aspartate 151 functions as the Proton acceptor in the catalytic mechanism. Disordered regions lie at residues 324 to 380 and 404 to 431; these read PAVE…DKSE and ENYQEEGDPRTRASAPQSPPQVSRHKSH. The segment covering 350-370 has biased composition (low complexity); that stretch reads SNQSIPSMSISASSQSSSVNS. 2 positions are modified to phosphoserine: serine 421 and serine 445. The stretch at 458–651 forms a coiled coil; it reads SELREQMSGY…QTQKDLEHAM (194 aa). Residues 567-587 form a disordered region; that stretch reads KEELNENQSTPKKEKQEWLSK. A compositionally biased stretch (basic and acidic residues) spans 577-587; that stretch reads PKKEKQEWLSK. The residue at position 669 (threonine 669) is a Phosphothreonine. A coiled-coil region spans residues 754 to 877; the sequence is KAVLKRLKEE…LERQAREIEA (124 aa). Residues 905–1001 form a disordered region; that stretch reads PGASSWSHNP…ISNGSHMSYT (97 aa). The segment covering 906–915 has biased composition (polar residues); the sequence is GASSWSHNPT. Position 965 is a phosphoserine (serine 965). A compositionally biased stretch (polar residues) spans 975 to 1001; the sequence is GGRTEQGMSRSTSVTSQISNGSHMSYT.

It belongs to the protein kinase superfamily. STE Ser/Thr protein kinase family. STE20 subfamily. Self-associates. Interacts with MAP2K3. Interacts with SPRED1. Interacts with TESK1; the interaction inhibits TAOK1 kinase activity. Interacts with MAP3K7. Post-translationally, proteolytically processed by caspase-3 (CASP3). In terms of processing, autophosphorylated. Phosphorylated by ATM in response to DNA damage. Phosphorylated by LRRK2.

Its subcellular location is the cytoplasm. It carries out the reaction L-seryl-[protein] + ATP = O-phospho-L-seryl-[protein] + ADP + H(+). The catalysed reaction is L-threonyl-[protein] + ATP = O-phospho-L-threonyl-[protein] + ADP + H(+). With respect to regulation, serine/threonine-protein kinase activity is inhibited by SPRED1. In terms of biological role, serine/threonine-protein kinase involved in various processes such as p38/MAPK14 stress-activated MAPK cascade, DNA damage response and regulation of cytoskeleton stability. Phosphorylates MAP2K3, MAP2K6 and MARK2. Acts as an activator of the p38/MAPK14 stress-activated MAPK cascade by mediating phosphorylation and subsequent activation of the upstream MAP2K3 and MAP2K6 kinases. Involved in G-protein coupled receptor signaling to p38/MAPK14. In response to DNA damage, involved in the G2/M transition DNA damage checkpoint by activating the p38/MAPK14 stress-activated MAPK cascade, probably by mediating phosphorylation of MAP2K3 and MAP2K6. Acts as a regulator of cytoskeleton stability by phosphorylating 'Thr-208' of MARK2, leading to activate MARK2 kinase activity and subsequent phosphorylation and detachment of MAPT/TAU from microtubules. Also acts as a regulator of apoptosis: regulates apoptotic morphological changes, including cell contraction, membrane blebbing and apoptotic bodies formation via activation of the MAPK8/JNK cascade. During fetal development, it plays an essential role in the regulation of neuronal differentiation and migration to the cortical plate. In Rattus norvegicus (Rat), this protein is Serine/threonine-protein kinase TAO1 (Taok1).